Consider the following 133-residue polypeptide: uncharacterized protein (133 aa).

Helical transmembrane passes span 8 to 28 (MVLL…LLLL) and 46 to 66 (SFSI…SIGA).

It is found in the membrane. This is an uncharacterized protein from Saccharomyces cerevisiae (strain ATCC 204508 / S288c) (Baker's yeast).